We begin with the raw amino-acid sequence, 204 residues long: Abscisic acid receptor PYL3 (204 aa).

The interval 40-191 is START-like; it reads HEPRDHQCSS…NLKSLAEVSE (152 aa). Cys-47 and Cys-172 are disulfide-bonded. Residues Lys-76, 104–109, 131–137, and Glu-156 contribute to the abscisate site; these read ATRSTE and RLKNYSS. A Gate loop motif is present at residues 100-104; the sequence is SGLPA. A Latch loop motif is present at residues 130–132; the sequence is HRL.

Belongs to the PYR/PYL/RCAR abscisic acid intracellular receptor family. In terms of assembly, monomer. Interacts with PP2C50. Binding to PP2C50 is dependent on the presence of abscisic acid (ABA). Interacts with PP2C30 and PP2C53.

The protein resides in the cytoplasm. It is found in the cytosol. Its subcellular location is the nucleus. Its function is as follows. Involved in abscisic acid (ABA) signaling during seed germination and abiotic stress response. Acts as a positive regulator of ABA-mediated inhibition of seed germination, and tolerance to drought and cold stresses. Together with PP2C50 and SAPK10, may form an ABA signaling module involved in stress response. Inhibits the protein phosphatases PP2C06 and PP2C09 when activated by abscisic acid (ABA). This chain is Abscisic acid receptor PYL3, found in Oryza sativa subsp. japonica (Rice).